The sequence spans 660 residues: Bifunctional polymyxin resistance protein ArnA (660 aa).

The interval M1–L304 is formyltransferase ArnAFT. The active-site Proton donor; for formyltransferase activity is H104. (6R)-10-formyltetrahydrofolate contacts are provided by residues R114 and V136–D140. The dehydrogenase ArnADH stretch occupies residues R314–S660. Residues D347 and D368–I369 each bind NAD(+). UDP-alpha-D-glucuronate contacts are provided by residues A393, Y398, and T432–S433. The Proton acceptor; for decarboxylase activity role is filled by E434. Residues R460, N492, K526–R535, and Y613 each bind UDP-alpha-D-glucuronate. The active-site Proton donor; for decarboxylase activity is the R619.

It in the N-terminal section; belongs to the Fmt family. UDP-L-Ara4N formyltransferase subfamily. This sequence in the C-terminal section; belongs to the NAD(P)-dependent epimerase/dehydratase family. UDP-glucuronic acid decarboxylase subfamily. In terms of assembly, homohexamer, formed by a dimer of trimers.

The enzyme catalyses UDP-alpha-D-glucuronate + NAD(+) = UDP-beta-L-threo-pentopyranos-4-ulose + CO2 + NADH. It carries out the reaction UDP-4-amino-4-deoxy-beta-L-arabinose + (6R)-10-formyltetrahydrofolate = UDP-4-deoxy-4-formamido-beta-L-arabinose + (6S)-5,6,7,8-tetrahydrofolate + H(+). The protein operates within nucleotide-sugar biosynthesis; UDP-4-deoxy-4-formamido-beta-L-arabinose biosynthesis; UDP-4-deoxy-4-formamido-beta-L-arabinose from UDP-alpha-D-glucuronate: step 1/3. It functions in the pathway nucleotide-sugar biosynthesis; UDP-4-deoxy-4-formamido-beta-L-arabinose biosynthesis; UDP-4-deoxy-4-formamido-beta-L-arabinose from UDP-alpha-D-glucuronate: step 3/3. It participates in bacterial outer membrane biogenesis; lipopolysaccharide biosynthesis. Its function is as follows. Bifunctional enzyme that catalyzes the oxidative decarboxylation of UDP-glucuronic acid (UDP-GlcUA) to UDP-4-keto-arabinose (UDP-Ara4O) and the addition of a formyl group to UDP-4-amino-4-deoxy-L-arabinose (UDP-L-Ara4N) to form UDP-L-4-formamido-arabinose (UDP-L-Ara4FN). The modified arabinose is attached to lipid A and is required for resistance to polymyxin and cationic antimicrobial peptides. The polypeptide is Bifunctional polymyxin resistance protein ArnA (Salmonella heidelberg (strain SL476)).